Consider the following 219-residue polypeptide: NAD(P)H-quinone oxidoreductase subunit K 2 (219 aa).

Cys53, Cys54, Cys118, and Cys149 together coordinate [4Fe-4S] cluster.

Belongs to the complex I 20 kDa subunit family. NDH-1 can be composed of about 15 different subunits; different subcomplexes with different compositions have been identified which probably have different functions. [4Fe-4S] cluster serves as cofactor.

Its subcellular location is the cellular thylakoid membrane. The catalysed reaction is a plastoquinone + NADH + (n+1) H(+)(in) = a plastoquinol + NAD(+) + n H(+)(out). It carries out the reaction a plastoquinone + NADPH + (n+1) H(+)(in) = a plastoquinol + NADP(+) + n H(+)(out). Its function is as follows. NDH-1 shuttles electrons from an unknown electron donor, via FMN and iron-sulfur (Fe-S) centers, to quinones in the respiratory and/or the photosynthetic chain. The immediate electron acceptor for the enzyme in this species is believed to be plastoquinone. Couples the redox reaction to proton translocation, and thus conserves the redox energy in a proton gradient. Cyanobacterial NDH-1 also plays a role in inorganic carbon-concentration. The polypeptide is NAD(P)H-quinone oxidoreductase subunit K 2 (Synechocystis sp. (strain ATCC 27184 / PCC 6803 / Kazusa)).